The sequence spans 254 residues: Imidazole glycerol phosphate synthase subunit HisF (254 aa).

Residues Asp13 and Asp132 contribute to the active site.

It belongs to the HisA/HisF family. Heterodimer of HisH and HisF.

It is found in the cytoplasm. The enzyme catalyses 5-[(5-phospho-1-deoxy-D-ribulos-1-ylimino)methylamino]-1-(5-phospho-beta-D-ribosyl)imidazole-4-carboxamide + L-glutamine = D-erythro-1-(imidazol-4-yl)glycerol 3-phosphate + 5-amino-1-(5-phospho-beta-D-ribosyl)imidazole-4-carboxamide + L-glutamate + H(+). It functions in the pathway amino-acid biosynthesis; L-histidine biosynthesis; L-histidine from 5-phospho-alpha-D-ribose 1-diphosphate: step 5/9. IGPS catalyzes the conversion of PRFAR and glutamine to IGP, AICAR and glutamate. The HisF subunit catalyzes the cyclization activity that produces IGP and AICAR from PRFAR using the ammonia provided by the HisH subunit. This Nautilia profundicola (strain ATCC BAA-1463 / DSM 18972 / AmH) protein is Imidazole glycerol phosphate synthase subunit HisF.